A 140-amino-acid chain; its full sequence is Nucleoside diphosphate kinase (140 aa).

ATP contacts are provided by Lys11, Phe59, Arg87, Thr93, Arg104, and Asn114. The active-site Pros-phosphohistidine intermediate is the His117.

This sequence belongs to the NDK family. In terms of assembly, homotetramer. It depends on Mg(2+) as a cofactor.

It localises to the cytoplasm. The enzyme catalyses a 2'-deoxyribonucleoside 5'-diphosphate + ATP = a 2'-deoxyribonucleoside 5'-triphosphate + ADP. The catalysed reaction is a ribonucleoside 5'-diphosphate + ATP = a ribonucleoside 5'-triphosphate + ADP. Major role in the synthesis of nucleoside triphosphates other than ATP. The ATP gamma phosphate is transferred to the NDP beta phosphate via a ping-pong mechanism, using a phosphorylated active-site intermediate. This Rhodospirillum centenum (strain ATCC 51521 / SW) protein is Nucleoside diphosphate kinase.